Consider the following 205-residue polypeptide: Glycerol-3-phosphate acyltransferase (205 aa).

5 helical membrane-spanning segments follow: residues 4 to 24 (IAPG…AILV), 80 to 100 (PFWL…PVFF), 107 to 127 (GVAT…GVMA), 130 to 150 (WLLT…SALI), and 155 to 175 (VWWF…LILL).

The protein belongs to the PlsY family. Probably interacts with PlsX.

It localises to the cell inner membrane. The enzyme catalyses an acyl phosphate + sn-glycerol 3-phosphate = a 1-acyl-sn-glycero-3-phosphate + phosphate. Its pathway is lipid metabolism; phospholipid metabolism. Catalyzes the transfer of an acyl group from acyl-phosphate (acyl-PO(4)) to glycerol-3-phosphate (G3P) to form lysophosphatidic acid (LPA). This enzyme utilizes acyl-phosphate as fatty acyl donor, but not acyl-CoA or acyl-ACP. The chain is Glycerol-3-phosphate acyltransferase from Klebsiella pneumoniae subsp. pneumoniae (strain ATCC 700721 / MGH 78578).